The chain runs to 663 residues: Glucans biosynthesis glucosyltransferase H (663 aa).

The next 6 membrane-spanning stretches (helical) occupy residues Trp64–Ala86, Leu101–Met123, Leu413–Ile435, Ala470–Leu492, Glu558–Thr580, and Leu584–His606.

Belongs to the glycosyltransferase 2 family. OpgH subfamily.

Its subcellular location is the cell inner membrane. The protein operates within glycan metabolism; osmoregulated periplasmic glucan (OPG) biosynthesis. In terms of biological role, involved in the biosynthesis of osmoregulated periplasmic glucans (OPGs). In Caulobacter vibrioides (strain ATCC 19089 / CIP 103742 / CB 15) (Caulobacter crescentus), this protein is Glucans biosynthesis glucosyltransferase H.